The following is a 362-amino-acid chain: Phosphoserine aminotransferase (362 aa).

Residue R43 coordinates L-glutamate. Pyridoxal 5'-phosphate-binding positions include 77–78 (AR), W103, T153, D173, and Q196. N6-(pyridoxal phosphate)lysine is present on K197.

It belongs to the class-V pyridoxal-phosphate-dependent aminotransferase family. SerC subfamily. Homodimer. It depends on pyridoxal 5'-phosphate as a cofactor.

The protein resides in the cytoplasm. It catalyses the reaction O-phospho-L-serine + 2-oxoglutarate = 3-phosphooxypyruvate + L-glutamate. The enzyme catalyses 4-(phosphooxy)-L-threonine + 2-oxoglutarate = (R)-3-hydroxy-2-oxo-4-phosphooxybutanoate + L-glutamate. The protein operates within amino-acid biosynthesis; L-serine biosynthesis; L-serine from 3-phospho-D-glycerate: step 2/3. It participates in cofactor biosynthesis; pyridoxine 5'-phosphate biosynthesis; pyridoxine 5'-phosphate from D-erythrose 4-phosphate: step 3/5. Functionally, catalyzes the reversible conversion of 3-phosphohydroxypyruvate to phosphoserine and of 3-hydroxy-2-oxo-4-phosphonooxybutanoate to phosphohydroxythreonine. This Legionella pneumophila (strain Corby) protein is Phosphoserine aminotransferase.